Here is a 430-residue protein sequence, read N- to C-terminus: Acylsugar acyltransferase 3 (430 aa).

Catalysis depends on proton acceptor residues His-155 and Asp-367.

It belongs to the plant acyltransferase family. As to quaternary structure, monomer. As to expression, expressed in tip cells of type I trichomes of stems and petioles, sites of acylsugars production.

Functionally, catalyzes the transfer of short (four to five carbons) branched acyl chains to the furanose ring of di-acylsucrose acceptors to produce tri-acylsucroses such as S3:15 (5,5,5), S4:17 (2,5,5,5) and S4:24 (2,5,5,12) acylsucroses. The protein is Acylsugar acyltransferase 3 of Solanum lycopersicum (Tomato).